Here is a 208-residue protein sequence, read N- to C-terminus: Ribosomal RNA large subunit methyltransferase E (208 aa).

S-adenosyl-L-methionine contacts are provided by glycine 62, tryptophan 64, aspartate 82, aspartate 98, and aspartate 123. Lysine 163 functions as the Proton acceptor in the catalytic mechanism.

This sequence belongs to the class I-like SAM-binding methyltransferase superfamily. RNA methyltransferase RlmE family.

It localises to the cytoplasm. It carries out the reaction uridine(2552) in 23S rRNA + S-adenosyl-L-methionine = 2'-O-methyluridine(2552) in 23S rRNA + S-adenosyl-L-homocysteine + H(+). Specifically methylates the uridine in position 2552 of 23S rRNA at the 2'-O position of the ribose in the fully assembled 50S ribosomal subunit. The polypeptide is Ribosomal RNA large subunit methyltransferase E (Mannheimia succiniciproducens (strain KCTC 0769BP / MBEL55E)).